A 477-amino-acid polypeptide reads, in one-letter code: Bifunctional protein HldE (477 aa).

The ribokinase stretch occupies residues 1–319; sequence MKITLPPFDQ…RALQEQEQSG (319 aa). 195–198 contributes to the ATP binding site; that stretch reads NLAE. Asp264 is a catalytic residue. The interval 344–477 is cytidylyltransferase; the sequence is MTNGCFDLLH…IERMQSAPDT (134 aa).

In the N-terminal section; belongs to the carbohydrate kinase PfkB family. This sequence in the C-terminal section; belongs to the cytidylyltransferase family. Homodimer.

It carries out the reaction D-glycero-beta-D-manno-heptose 7-phosphate + ATP = D-glycero-beta-D-manno-heptose 1,7-bisphosphate + ADP + H(+). It catalyses the reaction D-glycero-beta-D-manno-heptose 1-phosphate + ATP + H(+) = ADP-D-glycero-beta-D-manno-heptose + diphosphate. Its pathway is nucleotide-sugar biosynthesis; ADP-L-glycero-beta-D-manno-heptose biosynthesis; ADP-L-glycero-beta-D-manno-heptose from D-glycero-beta-D-manno-heptose 7-phosphate: step 1/4. The protein operates within nucleotide-sugar biosynthesis; ADP-L-glycero-beta-D-manno-heptose biosynthesis; ADP-L-glycero-beta-D-manno-heptose from D-glycero-beta-D-manno-heptose 7-phosphate: step 3/4. Its function is as follows. Catalyzes the phosphorylation of D-glycero-D-manno-heptose 7-phosphate at the C-1 position to selectively form D-glycero-beta-D-manno-heptose-1,7-bisphosphate. In terms of biological role, catalyzes the ADP transfer from ATP to D-glycero-beta-D-manno-heptose 1-phosphate, yielding ADP-D-glycero-beta-D-manno-heptose. This is Bifunctional protein HldE from Alkalilimnicola ehrlichii (strain ATCC BAA-1101 / DSM 17681 / MLHE-1).